The primary structure comprises 256 residues: 3-dehydroquinate dehydratase (256 aa).

3-dehydroquinate is bound by residues 46 to 48 (EWR) and Arg-82. His-144 (proton donor/acceptor) is an active-site residue. Catalysis depends on Lys-171, which acts as the Schiff-base intermediate with substrate. Positions 213, 232, and 236 each coordinate 3-dehydroquinate.

It belongs to the type-I 3-dehydroquinase family. In terms of assembly, homodimer.

The enzyme catalyses 3-dehydroquinate = 3-dehydroshikimate + H2O. It participates in metabolic intermediate biosynthesis; chorismate biosynthesis; chorismate from D-erythrose 4-phosphate and phosphoenolpyruvate: step 3/7. Involved in the third step of the chorismate pathway, which leads to the biosynthesis of aromatic amino acids. Catalyzes the cis-dehydration of 3-dehydroquinate (DHQ) and introduces the first double bond of the aromatic ring to yield 3-dehydroshikimate. This Shouchella clausii (strain KSM-K16) (Alkalihalobacillus clausii) protein is 3-dehydroquinate dehydratase.